A 205-amino-acid chain; its full sequence is Sarcosine oxidase subunit gamma (205 aa).

The protein belongs to the SoxG family. Heterotetramer composed of subunits alpha (SoxA), beta (SoxB), gamma (SoxG) and delta (SoxD).

It localises to the cytoplasm. It catalyses the reaction sarcosine + (6S)-5,6,7,8-tetrahydrofolate + O2 = (6R)-5,10-methylene-5,6,7,8-tetrahydrofolate + glycine + H2O2. The catalysed reaction is sarcosine + O2 + H2O = formaldehyde + glycine + H2O2. Inhibited by Zn(2+), Cu(2+), Cd(2+), Hg(2+), Ag(+), p-chloromercuribenzoate (p-CMB), iodoacetamide, N-ethylmaleimide, CN(-), o-phenanthroline and sodium lauryl sulfate. In terms of biological role, in the presence of tetrahydrofolate, catalyzes the oxidative demethylation of sarcosine to yield glycine, 5,10-methylenetetrahydrofolate and hydrogen peroxide. In the absence of tetrahydrofolate, catalyzes the oxidative demethylation of sarcosine to yield glycine, formaldehyde and hydrogen peroxide. Can also use N-methyl-L-alanine and N-ethyl-L-glycine. Is very specific for oxygen as an acceptor. This is Sarcosine oxidase subunit gamma from Corynebacterium sp. (strain U-96).